The sequence spans 64 residues: Conotoxin Leo-T1 (64 aa).

A signal peptide spans 1 to 22 (MRCLPVFIILLLLIPSAPSVDA). The propeptide occupies 23 to 48 (QPKTEDDVPLASLHDNAKLTLQGLWD).

It belongs to the conotoxin T superfamily. Post-translationally, contains 2 disulfide bonds that can be either 'C1-C3, C2-C4' or 'C1-C4, C2-C3', since these disulfide connectivities have been observed for conotoxins with cysteine framework V (for examples, see AC P0DQQ7 and AC P81755). As to expression, expressed by the venom duct.

The protein localises to the secreted. The polypeptide is Conotoxin Leo-T1 (Conus leopardus (Leopard cone)).